The primary structure comprises 244 residues: Probable transcriptional regulatory protein Dgeo_2194 (244 aa).

The tract at residues methionine 1–arginine 21 is disordered.

This sequence belongs to the TACO1 family.

Its subcellular location is the cytoplasm. The polypeptide is Probable transcriptional regulatory protein Dgeo_2194 (Deinococcus geothermalis (strain DSM 11300 / CIP 105573 / AG-3a)).